The following is a 1207-amino-acid chain: DNA-directed RNA polymerase subunit beta' (1207 aa).

Cysteine 60, cysteine 62, cysteine 75, and cysteine 78 together coordinate Zn(2+). 3 residues coordinate Mg(2+): aspartate 449, aspartate 451, and aspartate 453. Positions 822, 896, 903, and 906 each coordinate Zn(2+).

This sequence belongs to the RNA polymerase beta' chain family. The RNAP catalytic core consists of 2 alpha, 1 beta, 1 beta' and 1 omega subunit. When a sigma factor is associated with the core the holoenzyme is formed, which can initiate transcription. The cofactor is Mg(2+). Requires Zn(2+) as cofactor.

The catalysed reaction is RNA(n) + a ribonucleoside 5'-triphosphate = RNA(n+1) + diphosphate. Its function is as follows. DNA-dependent RNA polymerase catalyzes the transcription of DNA into RNA using the four ribonucleoside triphosphates as substrates. The sequence is that of DNA-directed RNA polymerase subunit beta' from Staphylococcus epidermidis (strain ATCC 35984 / DSM 28319 / BCRC 17069 / CCUG 31568 / BM 3577 / RP62A).